The chain runs to 299 residues: GTPase Era (299 aa).

Positions 8–176 constitute an Era-type G domain; that stretch reads RCGYVAIVGR…EKLVGERLPE (169 aa). The tract at residues 16–23 is G1; that stretch reads GRPNVGKS. A GTP-binding site is contributed by 16-23; sequence GRPNVGKS. Residues 42-46 form a G2 region; it reads QTTRH. Positions 63–66 are G3; that stretch reads DTPG. GTP contacts are provided by residues 63 to 67 and 125 to 128; these read DTPGL and NKAD. The interval 125–128 is G4; that stretch reads NKAD. The interval 155-157 is G5; sequence ISA. In terms of domain architecture, KH type-2 spans 199-283; that stretch reads IREKIMRQLG…MLNLWVKVKG (85 aa).

The protein belongs to the TRAFAC class TrmE-Era-EngA-EngB-Septin-like GTPase superfamily. Era GTPase family. In terms of assembly, monomer.

The protein resides in the cytoplasm. Its subcellular location is the cell inner membrane. Its function is as follows. An essential GTPase that binds both GDP and GTP, with rapid nucleotide exchange. Plays a role in 16S rRNA processing and 30S ribosomal subunit biogenesis and possibly also in cell cycle regulation and energy metabolism. This Ectopseudomonas mendocina (strain ymp) (Pseudomonas mendocina) protein is GTPase Era.